Consider the following 216-residue polypeptide: Adenylate kinase (216 aa).

10-15 lines the ATP pocket; sequence GAGKGT. Residues 30 to 59 form an NMP region; that stretch reads STGDIFRAAIKNQTPMGVEAKKFIDKGELV. Residues Thr31, Arg36, 57–59, 85–88, and Gln92 each bind AMP; these read ELV and GFPR. Residues 126–164 form an LID region; it reads GRFICRNCGTTYHRLYNPTKVEGTCDVCGGHDFYQRDDD. Arg127 is an ATP binding site. Residues Cys130 and Cys133 each contribute to the Zn(2+) site. 136-137 serves as a coordination point for ATP; that stretch reads TY. Cys150 and Cys153 together coordinate Zn(2+). AMP contacts are provided by Arg161 and Arg172. Position 200 (Gln200) interacts with ATP.

This sequence belongs to the adenylate kinase family. As to quaternary structure, monomer.

Its subcellular location is the cytoplasm. It carries out the reaction AMP + ATP = 2 ADP. The protein operates within purine metabolism; AMP biosynthesis via salvage pathway; AMP from ADP: step 1/1. In terms of biological role, catalyzes the reversible transfer of the terminal phosphate group between ATP and AMP. Plays an important role in cellular energy homeostasis and in adenine nucleotide metabolism. In Limosilactobacillus fermentum (strain NBRC 3956 / LMG 18251) (Lactobacillus fermentum), this protein is Adenylate kinase.